A 135-amino-acid polypeptide reads, in one-letter code: UPF0251 protein Hore_18270 (135 aa).

Belongs to the UPF0251 family.

This is UPF0251 protein Hore_18270 from Halothermothrix orenii (strain H 168 / OCM 544 / DSM 9562).